Here is an 860-residue protein sequence, read N- to C-terminus: Leucine--tRNA ligase (860 aa).

Positions P42–H52 match the 'HIGH' region motif. The short motif at K619–S623 is the 'KMSKS' region element. K622 serves as a coordination point for ATP.

Belongs to the class-I aminoacyl-tRNA synthetase family.

It is found in the cytoplasm. It carries out the reaction tRNA(Leu) + L-leucine + ATP = L-leucyl-tRNA(Leu) + AMP + diphosphate. The chain is Leucine--tRNA ligase from Sodalis glossinidius (strain morsitans).